The chain runs to 52 residues: UPF0057 membrane protein At1g57550 (52 aa).

2 helical membrane passes run 4–24 (FLEV…RYGL) and 30–50 (VCLL…IYVL).

Belongs to the UPF0057 (PMP3) family.

The protein resides in the membrane. The polypeptide is UPF0057 membrane protein At1g57550 (Arabidopsis thaliana (Mouse-ear cress)).